Consider the following 61-residue polypeptide: Hepcidin (61 aa).

The tract at residues 1–24 (LQVLTEEVGSIDSPVGEHQQPGGE) is disordered. Residues 1-34 (LQVLTEEVGSIDSPVGEHQQPGGESMRLPEHFRF) constitute a propeptide that is removed on maturation. 4 cysteine pairs are disulfide-bonded: Cys-43–Cys-59, Cys-46–Cys-49, Cys-47–Xaa-55, and Cys-50–Cys-58.

The protein belongs to the hepcidin family.

The protein localises to the secreted. Functionally, seems to act as a signaling molecule involved in the maintenance of iron homeostasis. Seems to be required in conjunction with HFE to regulate both intestinal iron absorption and iron storage in macrophages. May also have antimicrobial activity. The polypeptide is Hepcidin (hamp) (Oncorhynchus mykiss (Rainbow trout)).